The sequence spans 392 residues: NAC domain-containing protein 58 (392 aa).

An NAC domain is found at 9-173; the sequence is LPPGFRFHPT…DWVLCRIYKK (165 aa). Positions 317 to 345 are disordered; that stretch reads STSAGAVVEPPAVTGKRKRSSDGGEPTIQ.

Expressed in leaves, nodes, internodes and mature seeds. Highly expressed in roots. Expressed in leaf sheaths, flag leaves and inflorescences. Expressed in primary and lateral roots, particularly in the vascular tissues. Expressed in the primary phloem of the culm and leaf sheaths. Expressed principally in the primary phloem and in the peripheral zone of the leaf vascular bundles. Expressed in the floral tissues.

It localises to the nucleus. Its function is as follows. Transcription factor that acts as a positive regulator of the jasmonate (JA) pathway to mediate leaf senescence. May directly regulate LOX2, AOC, AOS2, AOC1 and OPR7, which are genes involved in the biosynthesis of JA. Regulates positively leaf senescence by directly targeting senescence-associated genes (SAGs) related to chlorophyll degradation, nutrient transport and other genes associated with abscisic acid-induced leaf senescence. Transcription activator that plays a role in mediating abiotic stress responses through the abscisic acid (ABA) pathway. Possesses transcriptional activator activity in yeast. The protein is NAC domain-containing protein 58 of Oryza sativa subsp. japonica (Rice).